We begin with the raw amino-acid sequence, 606 residues long: Polyphenol oxidase A1, chloroplastic (606 aa).

A chloroplast-targeting transit peptide spans 1-92 (MTSISALSFI…TLATNPSALA (92 aa)). A disordered region spans residues 32-63 (KQHQSSKLRKPKRQVTCSSNNNQNNPKEEQEL). A compositionally biased stretch (basic residues) spans 35–44 (QSSKLRKPKR). 2 disulfides stabilise this stretch: Cys103/Cys121 and Cys120/Cys182. His181, His202, His211, His333, His337, and His367 together coordinate Cu cation. A cross-link (2'-(S-cysteinyl)-histidine (Cys-His)) is located at residues 185 to 202 (CDGAYSQIGFPDLKLQVH).

It belongs to the tyrosinase family. It depends on Cu(2+) as a cofactor.

It is found in the plastid. It localises to the chloroplast thylakoid lumen. It carries out the reaction 2 catechol + O2 = 2 1,2-benzoquinone + 2 H2O. In terms of biological role, catalyzes the oxidation of mono- and o-diphenols to o-diquinones. The sequence is that of Polyphenol oxidase A1, chloroplastic from Vicia faba (Broad bean).